Consider the following 541-residue polypeptide: 2-hydroxyacylsphingosine 1-beta-galactosyltransferase (541 aa).

The N-terminal stretch at 1 to 20 (MKSYTPYFMLLWSAVGIARA) is a signal peptide. 3 N-linked (GlcNAc...) asparagine glycosylation sites follow: Asn-78, Asn-333, and Asn-442. The chain crosses the membrane as a helical span at residues 472 to 492 (YFLLDIAFVLLLGAVLLYFIL). The interval 518-541 (HYQNGIRNGKYKGNGRVKHEKKVR) is disordered. Over residues 526–541 (GKYKGNGRVKHEKKVR) the composition is skewed to basic residues.

Belongs to the UDP-glycosyltransferase family.

It localises to the membrane. The protein localises to the endoplasmic reticulum. The catalysed reaction is an N-acylsphing-4-enine + UDP-alpha-D-galactose = a beta-D-galactosyl-(1&lt;-&gt;1')-N-acylsphing-4-enine + UDP + H(+). It catalyses the reaction N-(2-hydroxy-hexanoyl)-sphing-4-enine + UDP-alpha-D-galactose = N-(2-hydroxy-hexanoyl)-beta-D-galactosyl-sphing-4-enine + UDP + H(+). The enzyme catalyses N-(2-hydroxy-hexanoyl)-sphinganine + UDP-alpha-D-galactose = N-(2-hydroxyhexanoyl)-beta-D-galactosylsphinganine + UDP + H(+). It carries out the reaction an N-acyl-sphingoid base + UDP-alpha-D-galactose = a D-galactosylceramide + UDP + H(+). It participates in sphingolipid metabolism; galactosylceramide biosynthesis. Functionally, catalyzes the transfer of galactose to ceramide, a key enzymatic step in the biosynthesis of galactocerebrosides, which are abundant sphingolipids of the myelin membrane of the central nervous system and peripheral nervous system. Galactosylates both hydroxy- and non-hydroxy fatty acid-containing ceramides and diglycerides. The polypeptide is 2-hydroxyacylsphingosine 1-beta-galactosyltransferase (Mus musculus (Mouse)).